Reading from the N-terminus, the 152-residue chain is MPAHSLAMSSPALPAFLLCSTLLVIKMYVVAIITGQVRLRKKAFANPEDALRHGGPQYCRSDPDVERCLRAHRNDMETIYPFLFLGFVYSFLGPNPFVAWMHFLVFLLGRVVHTVAYLGKLRAPIRSVTYTLAQLPCASMALQILWEAARHL.

The Lumenal segment spans residues 1–12; the sequence is MPAHSLAMSSPA. A helical transmembrane segment spans residues 13–41; sequence LPAFLLCSTLLVIKMYVVAIITGQVRLRK. Position 38 (Arg38) interacts with glutathione. Topologically, residues 42 to 60 are cytoplasmic; sequence KAFANPEDALRHGGPQYCR. A helical membrane pass occupies residues 61–90; that stretch reads SDPDVERCLRAHRNDMETIYPFLFLGFVYS. Residue 73–77 coordinates glutathione; sequence RNDME. Residues 91–95 lie on the Lumenal side of the membrane; it reads FLGPN. The chain crosses the membrane as a helical span at residues 96–119; the sequence is PFVAWMHFLVFLLGRVVHTVAYLG. Residues His113 and Tyr117 each coordinate glutathione. Topologically, residues 120 to 123 are cytoplasmic; sequence KLRA. Residues 124–152 traverse the membrane as a helical segment; sequence PIRSVTYTLAQLPCASMALQILWEAARHL. 126–130 is a binding site for glutathione; the sequence is RSVTY.

It belongs to the MAPEG family. Homotrimer. Glutathione is required as a cofactor.

The protein resides in the membrane. It is found in the cytoplasm. It localises to the perinuclear region. The enzyme catalyses prostaglandin H2 = prostaglandin E2. It catalyses the reaction 2-glyceryl-prostaglandin H2 = 2-glyceryl-prostaglandin E2. It carries out the reaction prostaglandin G2 = (15S)-15-hydroperoxy-prostaglandin E2. The catalysed reaction is 1-chloro-2,4-dinitrobenzene + glutathione = 2,4-dinitrophenyl-S-glutathione + chloride + H(+). The enzyme catalyses (5S)-hydroperoxy-(6E,8Z,11Z,14Z)-eicosatetraenoate + 2 glutathione = (5S)-hydroxy-(6E,8Z,11Z,14Z)-eicosatetraenoate + glutathione disulfide + H2O. It participates in lipid metabolism; prostaglandin biosynthesis. In terms of biological role, terminal enzyme of the cyclooxygenase (COX)-2-mediated prostaglandin E2 (PGE2) biosynthetic pathway. Catalyzes the glutathione-dependent oxidoreduction of prostaglandin endoperoxide H2 (PGH2) to prostaglandin E2 (PGE2) in response to inflammatory stimuli. Plays a key role in inflammation response, fever and pain. Also catalyzes the oxidoreduction of endocannabinoids into prostaglandin glycerol esters and PGG2 into 15-hydroperoxy-PGE2. In addition, displays low glutathione transferase and glutathione-dependent peroxidase activities, toward 1-chloro-2,4-dinitrobenzene and 5-hydroperoxyicosatetraenoic acid (5-HPETE), respectively. This chain is Prostaglandin E synthase (PTGES), found in Macaca fascicularis (Crab-eating macaque).